The primary structure comprises 340 residues: uncharacterized protein (340 aa).

In terms of domain architecture, Radical SAM core spans 58 to 307 (AALPFRYTVN…PSYREMLRER (250 aa)). 3 residues coordinate [4Fe-4S] cluster: Cys-72, Cys-76, and Cys-79. 2 helical membrane-spanning segments follow: residues 140–160 (YALMPGIIGALAASGTPLSIL) and 243–263 (QLLGQIAAAGATGVTVFGLHL).

[4Fe-4S] cluster serves as cofactor.

Its subcellular location is the cell membrane. This is an uncharacterized protein from Mycobacterium tuberculosis (strain CDC 1551 / Oshkosh).